Consider the following 173-residue polypeptide: Photosystem I assembly protein Ycf3 (173 aa).

TPR repeat units lie at residues 35 to 68, 72 to 105, and 120 to 153; these read AYIYYRDGLAAQNNGDYSEALDYYNESLLLEENK, GETLKNMAIIYMSNGEEDRSIETYQKALEENPKQ, and GRFAEQNGDLDQRDMWFDKAAQVWSKAVRLYPGG.

This sequence belongs to the Ycf3 family.

Its subcellular location is the cellular thylakoid membrane. Functionally, essential for the assembly of the photosystem I (PSI) complex. May act as a chaperone-like factor to guide the assembly of the PSI subunits. The chain is Photosystem I assembly protein Ycf3 from Prochlorococcus marinus subsp. pastoris (strain CCMP1986 / NIES-2087 / MED4).